A 451-amino-acid polypeptide reads, in one-letter code: Tubulin gamma-1 chain (451 aa).

142 to 148 (AGGTGSG) serves as a coordination point for GTP.

Belongs to the tubulin family.

Its subcellular location is the cytoplasm. It is found in the cytoskeleton. It localises to the microtubule organizing center. The protein localises to the centrosome. The protein resides in the spindle. Tubulin is the major constituent of microtubules. The gamma chain is found at microtubule organizing centers (MTOC) such as the spindle poles or the centrosome, suggesting that it is involved in the minus-end nucleation of microtubule assembly. The protein is Tubulin gamma-1 chain (tubg1) of Xenopus laevis (African clawed frog).